Here is a 208-residue protein sequence, read N- to C-terminus: Heat shock protein 26 (208 aa).

A phosphoserine mark is found at Ser-44, Ser-52, and Ser-58. Positions 71–179 constitute a sHSP domain; that stretch reads ANRNDIHWPA…KSKERIIQIQ (109 aa). The tract at residues 187–208 is disordered; the sequence is NVKANESEVKGKENGAPNGKDK. The span at 191–208 shows a compositional bias: basic and acidic residues; sequence NESEVKGKENGAPNGKDK.

Belongs to the small heat shock protein (HSP20) family.

This Drosophila melanogaster (Fruit fly) protein is Heat shock protein 26 (Hsp26).